Here is a 305-residue protein sequence, read N- to C-terminus: Acetylglutamate kinase (305 aa).

Substrate-binding positions include 67–68, Arg-89, and Asn-190; that span reads GG.

It belongs to the acetylglutamate kinase family. ArgB subfamily.

It is found in the cytoplasm. The catalysed reaction is N-acetyl-L-glutamate + ATP = N-acetyl-L-glutamyl 5-phosphate + ADP. Its pathway is amino-acid biosynthesis; L-arginine biosynthesis; N(2)-acetyl-L-ornithine from L-glutamate: step 2/4. Functionally, catalyzes the ATP-dependent phosphorylation of N-acetyl-L-glutamate. This chain is Acetylglutamate kinase, found in Bifidobacterium animalis subsp. lactis (strain AD011).